The chain runs to 242 residues: tRNA (guanine-N(1)-)-methyltransferase (242 aa).

Residues glycine 112 and 131 to 136 each bind S-adenosyl-L-methionine; that span reads LGDFIL.

Belongs to the RNA methyltransferase TrmD family. Homodimer.

It localises to the cytoplasm. It catalyses the reaction guanosine(37) in tRNA + S-adenosyl-L-methionine = N(1)-methylguanosine(37) in tRNA + S-adenosyl-L-homocysteine + H(+). Functionally, specifically methylates guanosine-37 in various tRNAs. In Crocosphaera subtropica (strain ATCC 51142 / BH68) (Cyanothece sp. (strain ATCC 51142)), this protein is tRNA (guanine-N(1)-)-methyltransferase.